The sequence spans 249 residues: Small ribosomal subunit protein uS2 (249 aa).

The protein belongs to the universal ribosomal protein uS2 family.

The protein is Small ribosomal subunit protein uS2 of Acinetobacter baylyi (strain ATCC 33305 / BD413 / ADP1).